A 212-amino-acid chain; its full sequence is Uridine kinase (212 aa).

Residue 13–20 participates in ATP binding; that stretch reads GASASGKS.

It belongs to the uridine kinase family.

The protein localises to the cytoplasm. The enzyme catalyses uridine + ATP = UMP + ADP + H(+). It carries out the reaction cytidine + ATP = CMP + ADP + H(+). It functions in the pathway pyrimidine metabolism; CTP biosynthesis via salvage pathway; CTP from cytidine: step 1/3. The protein operates within pyrimidine metabolism; UMP biosynthesis via salvage pathway; UMP from uridine: step 1/1. This is Uridine kinase from Shewanella baltica (strain OS223).